The chain runs to 238 residues: MAEIPIDFPPLKIQEKIATILDTFTELRARKKQYAFYRDYLLNQENIRKIYGANIPFETFQVKDICEIRRGRAITKAYIRNNPGENPVYSAATTNDGELGHIKDCDFDGEYITWTTNGYAGVVFYRNGKFNASQDCGVLKVKNKKICTKFLSLLLEIEATKFVHNLASRPKLSQKVMAEIELSFPPLEIQEKIADILCAFEKLCNDLVEGIPAEIELRKKQLDYYQNFLFNWVQKIRN.

It belongs to the type-I restriction system S methylase family. As to quaternary structure, the methyltransferase is composed of M and S polypeptides.

In terms of biological role, the specificity (S) subunit of a type I methyltransferase (MTase); this subunit dictates DNA sequence specificity. The single R subunit has multiple frameshifts and is probably not expressed. The chain is Putative type I specificity subunit S.MpnORF201P from Mycoplasma pneumoniae (strain ATCC 29342 / M129 / Subtype 1) (Mycoplasmoides pneumoniae).